A 365-amino-acid polypeptide reads, in one-letter code: Aminomethyltransferase (365 aa).

It belongs to the GcvT family. In terms of assembly, the glycine cleavage system is composed of four proteins: P, T, L and H.

The catalysed reaction is N(6)-[(R)-S(8)-aminomethyldihydrolipoyl]-L-lysyl-[protein] + (6S)-5,6,7,8-tetrahydrofolate = N(6)-[(R)-dihydrolipoyl]-L-lysyl-[protein] + (6R)-5,10-methylene-5,6,7,8-tetrahydrofolate + NH4(+). Its function is as follows. The glycine cleavage system catalyzes the degradation of glycine. This Chlorobium phaeobacteroides (strain DSM 266 / SMG 266 / 2430) protein is Aminomethyltransferase.